A 488-amino-acid polypeptide reads, in one-letter code: Ammonium transporter Rh type C-like 2 (488 aa).

Over 1 to 21 (MGNCFGSRGICDRPKNTNIRL) the chain is Cytoplasmic. The helical transmembrane segment at 22-42 (SLPAVCFVWQVSMIILFGVFV) threads the bilayer. At 43-73 (RYNEEADTNWVYTKKEKNITSDIENDFYFRY) the chain is on the extracellular side. Asn60 carries an N-linked (GlcNAc...) asparagine glycan. The chain crosses the membrane as a helical span at residues 74-94 (PSFQDVHVMIFVGFGFLMTFL). At 95–98 (KRYS) the chain is on the cytoplasmic side. A helical transmembrane segment spans residues 99–119 (FGAVGFNFLIAAFGLQWALLM). Over 120–139 (QGWFSPLGDDGKIKIGIENL) the chain is Extracellular. Residues 140–160 (INADFCVASCLIAYGAVLGKV) traverse the membrane as a helical segment. At 161-162 (SP) the chain is on the cytoplasmic side. The helical transmembrane segment at 163-183 (VQLLVMTLFGITLYAVEEFII) threads the bilayer. Residues 184–191 (LRVLNAKD) are Extracellular-facing. A helical membrane pass occupies residues 192–214 (AGGSMVIHTFGAYYGLSISRVLY). The Cytoplasmic portion of the chain corresponds to 215–232 (RPNLNKSKHMNGSVYHSD). The helical transmembrane segment at 233-253 (VFAMIGTLFLWMFWPSFNSAI) threads the bilayer. The Extracellular segment spans residues 254-264 (CNHGDGQHRAA). Residues 265-285 (INTYLALASTVLTTVAISSMF) form a helical membrane-spanning segment. The Cytoplasmic portion of the chain corresponds to 286–298 (EKTGKLDMVHIQN). Residues 299–319 (STLAGGVAVGTAAEFMLMPYG) form a helical membrane-spanning segment. Ser320 is a topological domain (extracellular). Residues 321 to 341 (LIVGFFCGIISTLGYIYLTPF) form a helical membrane-spanning segment. Residues 342-356 (LEERLKIQDTCGIHN) are Cytoplasmic-facing. The chain crosses the membrane as a helical span at residues 357-377 (LHAMPGVIGGIVGAISAAAAS). Residues 378–409 (KEVYGDLGLKNIFSIEGSNVTRLPTVQGGYQA) are Extracellular-facing. A helical membrane pass occupies residues 410 to 430 (AALCVALCFGIGGGTFVGLVL). Topologically, residues 431-488 (KLPIWGDPADEHCFNDEMYWEVPEDEESIIPPVLSYNNHMIPNNKHEEMRETNFAEQS) are cytoplasmic.

Belongs to the ammonium transporter (TC 2.A.49) family. Rh subfamily. Homotrimer. As to expression, at larval stages, expressed only in the yolk sac and gill. However, the kidney and the gills are major sites of expression in adults.

Its subcellular location is the apical cell membrane. Functions as an ammonia transporter. May play a role in the elimination of ammonia in the gill. The chain is Ammonium transporter Rh type C-like 2 (rhcgl2) from Danio rerio (Zebrafish).